The chain runs to 177 residues: Ribulose bisphosphate carboxylase small subunit, chloroplastic 6 (177 aa).

A chloroplast-targeting transit peptide spans 1–56; it reads MASSMMASTAAVARVGPAQTNMVAPFNGLRSSVAFPATRKANNDLSTLPSNGGRVS.

This sequence belongs to the RuBisCO small chain family. In terms of assembly, heterohexadecamer of 8 large and 8 small subunits.

Its subcellular location is the plastid. The protein localises to the chloroplast. Functionally, ruBisCO catalyzes two reactions: the carboxylation of D-ribulose 1,5-bisphosphate, the primary event in carbon dioxide fixation, as well as the oxidative fragmentation of the pentose substrate. Both reactions occur simultaneously and in competition at the same active site. Although the small subunit is not catalytic it is essential for maximal activity. This chain is Ribulose bisphosphate carboxylase small subunit, chloroplastic 6, found in Lemna gibba (Swollen duckweed).